The sequence spans 74 residues: Protein RALF-like 25 (74 aa).

Positions 1–22 (MKTFMIILLVICSILIVGRVEA) are cleaved as a signal peptide. Cystine bridges form between Cys-35–Cys-44 and Cys-62–Cys-68.

Belongs to the plant rapid alkalinization factor (RALF) family.

It is found in the secreted. Cell signaling peptide that may regulate plant stress, growth, and development. Mediates a rapid alkalinization of extracellular space by mediating a transient increase in the cytoplasmic Ca(2+) concentration leading to a calcium-dependent signaling events through a cell surface receptor and a concomitant activation of some intracellular mitogen-activated protein kinases. This Arabidopsis thaliana (Mouse-ear cress) protein is Protein RALF-like 25 (RALFL25).